The primary structure comprises 201 residues: 3-isopropylmalate dehydratase small subunit (201 aa).

This sequence belongs to the LeuD family. LeuD type 1 subfamily. As to quaternary structure, heterodimer of LeuC and LeuD.

The enzyme catalyses (2R,3S)-3-isopropylmalate = (2S)-2-isopropylmalate. It participates in amino-acid biosynthesis; L-leucine biosynthesis; L-leucine from 3-methyl-2-oxobutanoate: step 2/4. Functionally, catalyzes the isomerization between 2-isopropylmalate and 3-isopropylmalate, via the formation of 2-isopropylmaleate. The polypeptide is 3-isopropylmalate dehydratase small subunit (Paramagnetospirillum magneticum (strain ATCC 700264 / AMB-1) (Magnetospirillum magneticum)).